The following is a 54-amino-acid chain: MAGKRDKVRMISTAGTGHFYTTDKNKKNTPGKMEFSKYDPVVRKHVPYKEGKIK.

It belongs to the bacterial ribosomal protein bL33 family.

This chain is Large ribosomal subunit protein bL33, found in Stenotrophomonas maltophilia (strain R551-3).